The primary structure comprises 251 residues: PF03932 family protein CutC (251 aa).

The protein belongs to the CutC family.

The protein resides in the cytoplasm. In Erwinia tasmaniensis (strain DSM 17950 / CFBP 7177 / CIP 109463 / NCPPB 4357 / Et1/99), this protein is PF03932 family protein CutC.